We begin with the raw amino-acid sequence, 500 residues long: Guanosine-5'-triphosphate,3'-diphosphate pyrophosphatase (500 aa).

This sequence belongs to the GppA/Ppx family. GppA subfamily.

It catalyses the reaction guanosine 3'-diphosphate 5'-triphosphate + H2O = guanosine 3',5'-bis(diphosphate) + phosphate + H(+). It functions in the pathway purine metabolism; ppGpp biosynthesis; ppGpp from GTP: step 2/2. Functionally, catalyzes the conversion of pppGpp to ppGpp. Guanosine pentaphosphate (pppGpp) is a cytoplasmic signaling molecule which together with ppGpp controls the 'stringent response', an adaptive process that allows bacteria to respond to amino acid starvation, resulting in the coordinated regulation of numerous cellular activities. This chain is Guanosine-5'-triphosphate,3'-diphosphate pyrophosphatase, found in Photorhabdus laumondii subsp. laumondii (strain DSM 15139 / CIP 105565 / TT01) (Photorhabdus luminescens subsp. laumondii).